Consider the following 469-residue polypeptide: uncharacterized protein (469 aa).

Helical transmembrane passes span Asp42 to Ile62, Ile179 to Ser199, and Asn249 to Val269.

The protein localises to the cell membrane. This is an uncharacterized protein from Methanocaldococcus jannaschii (strain ATCC 43067 / DSM 2661 / JAL-1 / JCM 10045 / NBRC 100440) (Methanococcus jannaschii).